The sequence spans 306 residues: Methionyl-tRNA formyltransferase (306 aa).

Position 110-113 (110-113 (SLLP)) interacts with (6S)-5,6,7,8-tetrahydrofolate.

It belongs to the Fmt family.

The enzyme catalyses L-methionyl-tRNA(fMet) + (6R)-10-formyltetrahydrofolate = N-formyl-L-methionyl-tRNA(fMet) + (6S)-5,6,7,8-tetrahydrofolate + H(+). Its function is as follows. Attaches a formyl group to the free amino group of methionyl-tRNA(fMet). The formyl group appears to play a dual role in the initiator identity of N-formylmethionyl-tRNA by promoting its recognition by IF2 and preventing the misappropriation of this tRNA by the elongation apparatus. This chain is Methionyl-tRNA formyltransferase, found in Brucella melitensis biotype 2 (strain ATCC 23457).